The chain runs to 580 residues: Phosphatase and actin regulator 1 (580 aa).

Ser-67 and Ser-78 each carry phosphoserine. Phosphothreonine is present on Thr-104. A Nuclear localization signal motif is present at residues 108–129 (RRRSKFANLGRIFKPWKWRKKK). Residues 138 to 163 (AALERKISMRQSREELIKRGVLKEIY) form an RPEL 1 repeat. Disordered regions lie at residues 331 to 355 (EQRV…TKAG) and 376 to 410 (KENV…SSLY). Residues 335 to 345 (PCSTSYHSSGL) are compositionally biased toward polar residues. The span at 395-407 (EEEEEEEDEDDDS) shows a compositional bias: acidic residues. RPEL repeat units lie at residues 422-447 (DSLA…PRQT), 460-484 (TKLT…LKPR), and 498-523 (RRLT…IRFS). The segment at 462–494 (LTRRLSQRPTAEELEQRNILKPRNEQEEQEEKR) is disordered. Ser-467 is modified (phosphoserine). Over residues 471-494 (TAEELEQRNILKPRNEQEEQEEKR) the composition is skewed to basic and acidic residues. Position 505 is a phosphoserine (Ser-505).

The protein belongs to the phosphatase and actin regulator family. As to quaternary structure, interacts (via RPEL repeats) with ACTA1 and PPP1CA; ACTA1 and PPP1CA compete for the same binding site. As to expression, detected in umbilical vein endothelial cells.

The protein resides in the cytoplasm. It localises to the synapse. Its subcellular location is the nucleus. In terms of biological role, binds actin monomers (G actin) and plays a role in multiple processes including the regulation of actin cytoskeleton dynamics, actin stress fibers formation, cell motility and survival, formation of tubules by endothelial cells, and regulation of PPP1CA activity. Involved in the regulation of cortical neuron migration and dendrite arborization. The protein is Phosphatase and actin regulator 1 (PHACTR1) of Homo sapiens (Human).